Reading from the N-terminus, the 593-residue chain is Mitochondrial sodium/calcium exchanger protein (593 aa).

The first 20 residues, 1-20 (MGPLWALRVAGALSVAGVLA), serve as a signal peptide directing secretion. The Extracellular portion of the chain corresponds to 21-93 (GHDGSQRAGQ…GAFCTFPSSL (73 aa)). Asn58 carries N-linked (GlcNAc...) asparagine glycosylation. A helical transmembrane segment spans residues 94-114 (LPLSVSLYALWLLYLFVILGV). Over 115–135 (TAEKFFCPNLSAISTNLKLSH) the chain is Cytoplasmic. A helical membrane pass occupies residues 136–158 (NGLGVVGHSLTPALHGVTFLAFG). Residues 159–178 (NGAPDIFSAVVAFSDPRTAG) are Extracellular-facing. A helical transmembrane segment spans residues 179–199 (LAVGAIFGAGIFVTTVVAGGI). Over 200 to 215 (ALVKPFAAASRPFLRD) the chain is Cytoplasmic. The chain crosses the membrane as a helical span at residues 216 to 236 (VIFYMVAVFLTFLVLYFGYIT). The Extracellular segment spans residues 237–239 (LGE). Residues 240–260 (ALGYLGLYVFYVFTVVLCTWI) form a helical membrane-spanning segment. Residues 261 to 334 (HRWQRGDGPP…KWRRKPWYWR (74 aa)) lie on the Cytoplasmic side of the membrane. Over residues 268-277 (GPPPPGPWEP) the composition is skewed to pro residues. The interval 268–291 (GPPPPGPWEPAIPTDAEEQESSGT) is disordered. Residues 335–355 (LFKVLKVPVELVLLLTVPVVD) traverse the membrane as a helical segment. Residues 356 to 369 (PDKDDLNWKRPLNC) lie on the Extracellular side of the membrane. A helical transmembrane segment spans residues 370–390 (LHIVTGPLLCIFTLKSGAYGL). Topologically, residues 391–395 (YQIQG) are cytoplasmic. A helical transmembrane segment spans residues 396–416 (VFPVWALVALAGSVLAIIVFV). The Extracellular portion of the chain corresponds to 417 to 428 (TTHNEEPPKYHC). The chain crosses the membrane as a helical span at residues 429–449 (VFAFLGFLSSAMWINAAATEL). At 450-454 (VNILR) the chain is on the cytoplasmic side. The helical transmembrane segment at 455–475 (TLGIIFELSNTVLGLTLLAWG) threads the bilayer. At 476-496 (NSIGDTFSDLTMARQGYPRMA) the chain is on the extracellular side. A helical membrane pass occupies residues 497–517 (FSACFGGIIFNILVGVGLGCL). The Cytoplasmic portion of the chain corresponds to 518 to 533 (LQMTNSQMVVKLEPDS). The helical transmembrane segment at 534-554 (LLVWILAGALGLSLVFSFVAV) threads the bilayer. The Extracellular portion of the chain corresponds to 555–564 (PAQCFQLGKA). A helical membrane pass occupies residues 565-585 (YGTCLILYYLVFLCVALLTEF). At 586 to 593 (RVIHLAAT) the chain is on the cytoplasmic side.

It belongs to the Ca(2+):cation antiporter (CaCA) (TC 2.A.19) family. SLC24A subfamily.

Its subcellular location is the mitochondrion inner membrane. It carries out the reaction Ca(2+)(in) + 3 Na(+)(out) = Ca(2+)(out) + 3 Na(+)(in). Functionally, mitochondrial sodium/calcium antiporter that mediates sodium-dependent calcium efflux from mitochondrion, by mediating the exchange of 3 sodium ions per 1 calcium ion. Plays a central role in mitochondrial calcium homeostasis by mediating mitochondrial calcium extrusion: calcium efflux is essential for mitochondrial function and cell survival, notably in cardiomyocytes. Involved in B-lymphocyte chemotaxis. The protein is Mitochondrial sodium/calcium exchanger protein of Gallus gallus (Chicken).